The primary structure comprises 147 residues: 3-dehydroquinate dehydratase (147 aa).

The active-site Proton acceptor is Tyr23. Substrate-binding residues include Asn74, His80, and Asp87. The Proton donor role is filled by His100. Residues 101-102 and Arg111 each bind substrate; that span reads LS.

It belongs to the type-II 3-dehydroquinase family. As to quaternary structure, homododecamer.

The enzyme catalyses 3-dehydroquinate = 3-dehydroshikimate + H2O. It functions in the pathway metabolic intermediate biosynthesis; chorismate biosynthesis; chorismate from D-erythrose 4-phosphate and phosphoenolpyruvate: step 3/7. Catalyzes a trans-dehydration via an enolate intermediate. The sequence is that of 3-dehydroquinate dehydratase from Clostridium botulinum (strain ATCC 19397 / Type A).